The following is a 303-amino-acid chain: Trans-enoyl reductase tazE (303 aa).

The tract at residues 1-26 (MTAEHDAAILPKPGGPLAVGKRATPE) is disordered. 44–49 (CDYYQR) contacts NADP(+). 136–143 (LAVLTALT) provides a ligand contact to substrate. NADP(+)-binding positions include 170 to 173 (SSSV), 193 to 196 (SPKH), Tyr211, and 246 to 247 (LD). A substrate-binding site is contributed by 265-269 (VLPEC).

Belongs to the zinc-containing alcohol dehydrogenase family.

It participates in secondary metabolite biosynthesis. Trans-enoyl reductase; part of the gene cluster that mediates the biosynthesis of azaterrilone A and other azaphilones, a class of fungal metabolites characterized by a highly oxygenated pyrano-quinone bicyclic core and exhibiting a broad range of bioactivities. The first step of the pathway begins with the non-reducing polyketide synthase tazA that assembles one acetyl-CoA starter unit, five malonyl-CoA units, and catalyzes a series of Claisen condensations, methylation, PT-mediated cyclization, and finally releases the first hexaketide precursor through the R-domain. The tazA product then undergoes reduction on its terminal ketone and the following pyran-ring formation by yet undetermined enzyme(s). Dehydration and enoyl reduction, possibly involving the trans-enoyl reductase tazE leads to the next intermediate. TazD is predicted as an acetyltransferase and might catalyze the acetylation steps leading to the synthesis of azaterrilone A. Azaterrilone A is not the final product of the taz pathway and both the highly reducing polyketide synthase tazB and the dual enzyme tazHJ catalyze late steps of the pathway, leading to the production of the 2 final stereoisomers that contain additional polyketide modification whose structures have still to be determined. The sequence is that of Trans-enoyl reductase tazE from Aspergillus terreus (strain NIH 2624 / FGSC A1156).